The chain runs to 121 residues: Non-structural protein 8 (121 aa).

The signal sequence occupies residues 1–15 (MKLLIVFGLLTSVYC). Residues 19 to 121 (ECSIQECCEN…HDVRVVLDFI (103 aa)) enclose the SARS ORF8 Ig-like domain. Intrachain disulfides connect cysteine 25–cysteine 90, cysteine 37–cysteine 102, and cysteine 61–cysteine 83.

The chain is Non-structural protein 8 from Rhinolophus macrotis (Big-eared horseshoe bat).